Consider the following 328-residue polypeptide: Basic leucine zipper (bZIP) transcription factor atfB (328 aa).

A disordered region spans residues 1–39 (MLPEQSAFGRSAMPGSDAVNPGPSPFAPPPNSFSGDFLG). Over residues 22-31 (GPSPFAPPPN) the composition is skewed to pro residues. A basic motif region spans residues 163-202 (KAKREKFLERNRLAASKCRQKKKEHTQLLESRYREQSDKK). Positions 163 to 226 (KAKREKFLER…LGLKNEVLKH (64 aa)) constitute a bZIP domain. The leucine-zipper stretch occupies residues 205 to 219 (LVSEIARLRSEILGL). The interval 250–313 (TTAPDLTDVP…SEASVLTENS (64 aa)) is disordered. Polar residues predominate over residues 262–277 (ASSSEGPMTPRPQQAL). Positions 283-305 (DPLHLEPSRADGSTDHSVRRDSE) are enriched in basic and acidic residues.

It belongs to the bZIP family. ATF subfamily.

The protein resides in the nucleus. Its function is as follows. Transcription factor that acts as a key player in the regulatory circuit that integrates secondary metabolism and cellular response to oxidative stress. Regulates the genes involved in development, as well as osmotic, oxidative, and cell wall stresses. Participates in the caspofungin paradoxical effect (CPE), where fungi grow beyond the minimum inhibitory concentration of caspofungin. Plays a role in virulence. The protein is Basic leucine zipper (bZIP) transcription factor atfB of Aspergillus fumigatus (strain ATCC MYA-4609 / CBS 101355 / FGSC A1100 / Af293) (Neosartorya fumigata).